Here is a 189-residue protein sequence, read N- to C-terminus: Threonylcarbamoyl-AMP synthase (189 aa).

In terms of domain architecture, YrdC-like spans 9–189; it reads ASAQRKLSVY…IDGETGKRLR (181 aa).

This sequence belongs to the SUA5 family. TsaC subfamily.

The protein localises to the cytoplasm. It catalyses the reaction L-threonine + hydrogencarbonate + ATP = L-threonylcarbamoyladenylate + diphosphate + H2O. In terms of biological role, required for the formation of a threonylcarbamoyl group on adenosine at position 37 (t(6)A37) in tRNAs that read codons beginning with adenine. Catalyzes the conversion of L-threonine, HCO(3)(-)/CO(2) and ATP to give threonylcarbamoyl-AMP (TC-AMP) as the acyladenylate intermediate, with the release of diphosphate. The polypeptide is Threonylcarbamoyl-AMP synthase (Neisseria meningitidis serogroup C (strain 053442)).